A 189-amino-acid polypeptide reads, in one-letter code: Elongation factor P (189 aa).

An N6-(3,6-diaminohexanoyl)-5-hydroxylysine modification is found at lysine 34.

Belongs to the elongation factor P family. Post-translationally, may be beta-lysylated on the epsilon-amino group of Lys-34 by the combined action of EpmA and EpmB, and then hydroxylated on the C5 position of the same residue by EpmC (if this protein is present). Lysylation is critical for the stimulatory effect of EF-P on peptide-bond formation. The lysylation moiety may extend toward the peptidyltransferase center and stabilize the terminal 3-CCA end of the tRNA. Hydroxylation of the C5 position on Lys-34 may allow additional potential stabilizing hydrogen-bond interactions with the P-tRNA.

The protein resides in the cytoplasm. It participates in protein biosynthesis; polypeptide chain elongation. Functionally, involved in peptide bond synthesis. Alleviates ribosome stalling that occurs when 3 or more consecutive Pro residues or the sequence PPG is present in a protein, possibly by augmenting the peptidyl transferase activity of the ribosome. Modification of Lys-34 is required for alleviation. This is Elongation factor P from Halorhodospira halophila (strain DSM 244 / SL1) (Ectothiorhodospira halophila (strain DSM 244 / SL1)).